The following is a 345-amino-acid chain: Glycerol-3-phosphate dehydrogenase [NAD(P)+] (345 aa).

NADPH contacts are provided by Ser23, Tyr24, His44, and Lys118. 3 residues coordinate sn-glycerol 3-phosphate: Lys118, Gly147, and Thr149. Ala151 provides a ligand contact to NADPH. 5 residues coordinate sn-glycerol 3-phosphate: Lys203, Asp256, Ser266, Arg267, and Asn268. Lys203 (proton acceptor) is an active-site residue. Arg267 is a binding site for NADPH. The NADPH site is built by Val291 and Glu293.

Belongs to the NAD-dependent glycerol-3-phosphate dehydrogenase family.

It localises to the cytoplasm. It carries out the reaction sn-glycerol 3-phosphate + NAD(+) = dihydroxyacetone phosphate + NADH + H(+). The enzyme catalyses sn-glycerol 3-phosphate + NADP(+) = dihydroxyacetone phosphate + NADPH + H(+). Its pathway is membrane lipid metabolism; glycerophospholipid metabolism. Its function is as follows. Catalyzes the reduction of the glycolytic intermediate dihydroxyacetone phosphate (DHAP) to sn-glycerol 3-phosphate (G3P), the key precursor for phospholipid synthesis. The protein is Glycerol-3-phosphate dehydrogenase [NAD(P)+] of Vibrio campbellii (strain ATCC BAA-1116).